The primary structure comprises 224 residues: Ribose-5-phosphate isomerase A 1 (224 aa).

Residues 29-32 (SGST), 85-88 (DGAD), and 98-101 (KGGG) each bind substrate. The active-site Proton acceptor is the Glu107. Residue Lys125 participates in substrate binding.

Belongs to the ribose 5-phosphate isomerase family. In terms of assembly, homodimer.

It carries out the reaction aldehydo-D-ribose 5-phosphate = D-ribulose 5-phosphate. Its pathway is carbohydrate degradation; pentose phosphate pathway; D-ribose 5-phosphate from D-ribulose 5-phosphate (non-oxidative stage): step 1/1. Catalyzes the reversible conversion of ribose-5-phosphate to ribulose 5-phosphate. The protein is Ribose-5-phosphate isomerase A 1 of Oceanobacillus iheyensis (strain DSM 14371 / CIP 107618 / JCM 11309 / KCTC 3954 / HTE831).